A 201-amino-acid polypeptide reads, in one-letter code: Small ribosomal subunit protein uS4c (201 aa).

Positions 17-44 are disordered; that stretch reads ALPGLTNKKPRNGSDLRNQSRSGKKSQY. One can recognise an S4 RNA-binding domain in the interval 89–149; the sequence is MRLDNILFRL…DEQKSRALIQ (61 aa).

It belongs to the universal ribosomal protein uS4 family. In terms of assembly, part of the 30S ribosomal subunit. Contacts protein S5. The interaction surface between S4 and S5 is involved in control of translational fidelity.

The protein resides in the plastid. The protein localises to the chloroplast. In terms of biological role, one of the primary rRNA binding proteins, it binds directly to 16S rRNA where it nucleates assembly of the body of the 30S subunit. Functionally, with S5 and S12 plays an important role in translational accuracy. This chain is Small ribosomal subunit protein uS4c (rps4), found in Nicotiana sylvestris (Wood tobacco).